We begin with the raw amino-acid sequence, 206 residues long: Large ribosomal subunit protein uL4 (206 aa).

Residues 45 to 75 (RQGTHSTKTRGEVRGGGRKPWRQKGTGRARQ) are disordered. Residues 60-71 (GGRKPWRQKGTG) are compositionally biased toward basic residues.

Belongs to the universal ribosomal protein uL4 family. Part of the 50S ribosomal subunit.

Functionally, one of the primary rRNA binding proteins, this protein initially binds near the 5'-end of the 23S rRNA. It is important during the early stages of 50S assembly. It makes multiple contacts with different domains of the 23S rRNA in the assembled 50S subunit and ribosome. Forms part of the polypeptide exit tunnel. The chain is Large ribosomal subunit protein uL4 from Thermoanaerobacter pseudethanolicus (strain ATCC 33223 / 39E) (Clostridium thermohydrosulfuricum).